A 262-amino-acid polypeptide reads, in one-letter code: Tetrahydromethanopterin S-methyltransferase subunit C (262 aa).

6 helical membrane-spanning segments follow: residues 35–57 (FVPS…AGAN), 70–92 (GVPS…GVLI), 97–119 (GLPV…FIVG), 140–162 (LSLM…FSAD), 172–194 (GVIA…ACIG), and 214–236 (WLIF…FWLY).

Belongs to the MtrC family. In terms of assembly, the complex is composed of 8 subunits; MtrA, MtrB, MtrC, MtrD, MtrE, MtrF, MtrG and MtrH.

It is found in the cell membrane. The catalysed reaction is 5-methyl-5,6,7,8-tetrahydromethanopterin + coenzyme M + 2 Na(+)(in) = 5,6,7,8-tetrahydromethanopterin + methyl-coenzyme M + 2 Na(+)(out). It participates in one-carbon metabolism; methanogenesis from CO(2); methyl-coenzyme M from 5,10-methylene-5,6,7,8-tetrahydromethanopterin: step 2/2. Part of a complex that catalyzes the formation of methyl-coenzyme M and tetrahydromethanopterin from coenzyme M and methyl-tetrahydromethanopterin. This is an energy-conserving, sodium-ion translocating step. The polypeptide is Tetrahydromethanopterin S-methyltransferase subunit C (Methanococcus maripaludis (strain DSM 14266 / JCM 13030 / NBRC 101832 / S2 / LL)).